We begin with the raw amino-acid sequence, 146 residues long: Snake venom vascular endothelial growth factor toxin (146 aa).

Positions 1–24 (MAAYLLAVAILFCIQGWPLGTVQG) are cleaved as a signal peptide. Position 25 is a pyrrolidone carboxylic acid (Gln25). Cystine bridges form between Cys38–Cys80, Cys69–Cys115, and Cys73–Cys117. The segment at 119 to 146 (PRSASGVNSRKHKRNPEEGEPRAKFPFV) is disordered. Residues 133 to 146 (NPEEGEPRAKFPFV) are compositionally biased toward basic and acidic residues.

This sequence belongs to the PDGF/VEGF growth factor family. Snake venom VEGF subfamily. Homodimer; disulfide-linked. Interacts with VEGF receptor-1 (FLT1) with a high affinity, whereas it binds to VEGF receptor-2 (KDR) with a low affinity. Does not bind VEGF receptor-3 (FLT4). In terms of tissue distribution, expressed by the venom gland.

The protein resides in the secreted. Its function is as follows. Snake venom VEGFs may contribute to venom dispersion and prey subjugation by inducing vascular permeability and hypotension. This protein induces vascular permeability probably through VEGF (VEGFR) signaling. This protein also induces a drastic hypotensive effect after intravenous injection. The hypotension is mediated by nitric oxide (NO), which is produced by VEGF-activated endothelium NO synthase. Also induces angiogenesis in vitro. Like other crotalid VEGFs, this protein interacts with VEGF receptor-1 (FLT1) with a high affinity, whereas it binds to VEGF receptor-2 (KDR) with a low affinity. The sequence is that of Snake venom vascular endothelial growth factor toxin from Bothrops insularis (Golden lancehead).